The sequence spans 499 residues: Protein-cysteine N-palmitoyltransferase HHAT (499 aa).

Over 1–5 (MLPGW) the chain is Cytoplasmic. The helical transmembrane segment at 6 to 22 (ELTLCLLVSLGFHFRSF) threads the bilayer. Residues 23 to 67 (YEVYKVSREHEEELDQEFELEMDTLFGGLKKDPTDFEWNFWMEWG) are Lumenal-facing. Residues 68-84 (KRRLVWLFIGHMAVSQL) traverse the membrane as a helical segment. Residues 85 to 94 (ATLLTKKHRP) are Cytoplasmic-facing. Residues 91 to 155 (KHRPWIVMVY…TLRLQSVEEV (65 aa)) form an essential for palmitoylation of SHH region. An intramembrane segment occupies 95–119 (WIVMVYGMWACWCVLGAPGVVMVLL). Residues 120 to 131 (HSTIAFCVAQFR) lie on the Cytoplasmic side of the membrane. A helical transmembrane segment spans residues 132 to 148 (SVLLSWLCSLLLLSTLR). Residues 149–162 (LQSVEEVKRRWYKT) are Lumenal-facing. A helical transmembrane segment spans residues 163 to 183 (ENEYYLLQFTLTVRCLYYTSF). Residues 184–208 (SLELCRQPPSAQPTPSAQGASHSYP) are Cytoplasmic-facing. Residue Cys-188 is the site of S-palmitoyl cysteine attachment. Residues 209–223 (WLLTYVFYYPVFHNG) lie within the membrane without spanning it. Residues 224 to 249 (PILNFPEFFRQMQQPELNSLQHSLCI) lie on the Cytoplasmic side of the membrane. The S-palmitoyl cysteine moiety is linked to residue Cys-248. Residues 250 to 277 (VAKGLGRLLCWWWLAELMVHLMYMHALY) traverse the membrane as a helical segment. Residues 278 to 287 (SSAPLLESVS) are Lumenal-facing. A helical membrane pass occupies residues 288–316 (CWTLGGLALAQVLFFYVKYLVLFGVPALL). Residues 317-369 (MRLDGLTPPPLPRCVSTMFSFTGMWRYFDVGLHNFLIRYVYIPLGGSQHGLLG) lie on the Cytoplasmic side of the membrane. A lipid anchor (S-palmitoyl cysteine) is attached at Cys-330. A helical transmembrane segment spans residues 370–386 (TLLSTATTFAFVSYWHG). Residue His-385 is part of the active site. Residues 387 to 389 (SYE) are Lumenal-facing. Residues 390–405 (DLWCWAALNWLGVTVE) traverse the membrane as a helical segment. Topologically, residues 406–433 (SGVRRLLETPCVRETLARHLSPQAHHRL) are cytoplasmic. Residue Cys-416 is the site of S-palmitoyl cysteine attachment. The helical transmembrane segment at 434–454 (HALLAACSTSMLILFNLVFLG) threads the bilayer. 454–461 (GGIQVGKT) contributes to the GTP binding site. The Lumenal segment spans residues 455–468 (GIQVGKTYWNRIFL). A helical transmembrane segment spans residues 469–487 (QGWPWVTLSVLGFLYCYSH). Residues 488 to 499 (VDIAWAQTYTVL) lie on the Cytoplasmic side of the membrane.

It belongs to the membrane-bound acyltransferase family. HHAT subfamily.

The protein localises to the endoplasmic reticulum membrane. Its subcellular location is the golgi apparatus membrane. The enzyme catalyses N-terminal L-cysteinyl-[protein] + hexadecanoyl-CoA = N-terminal N-hexadecanoyl-L-cysteinyl-[protein] + CoA + H(+). The catalysed reaction is N-terminal L-cysteinyl-[protein]-C-terminal glycyl cholesterol ester + hexadecanoyl-CoA = N-terminal N-hexadecanoyl-L-cysteinyl-[protein]-C-terminal glycyl cholesterol ester + CoA + H(+). In terms of biological role, palmitoyl acyltransferase that catalyzes N-terminal palmitoylation of SHH; which is required for SHH signaling during limb development. It also catalyzes N-terminal palmitoylation of DHH. Promotes the transfer of palmitoyl-CoA from the cytoplasmic to the luminal side of the endoplasmic reticulum membrane, where SHH palmitoylation occurs. Plays a role in proper testis cord formation and the differentiation of Leydig cells. This chain is Protein-cysteine N-palmitoyltransferase HHAT (Hhat), found in Mus musculus (Mouse).